Reading from the N-terminus, the 884-residue chain is Probable inorganic carbon transporter subunit DabA (884 aa).

Zn(2+)-binding residues include Cys-390, Asp-392, His-582, and Cys-597.

This sequence belongs to the inorganic carbon transporter (TC 9.A.2) DabA family. In terms of assembly, forms a complex with DabB. Zn(2+) serves as cofactor.

It is found in the cell membrane. Part of an energy-coupled inorganic carbon pump. This Staphylococcus saprophyticus subsp. saprophyticus (strain ATCC 15305 / DSM 20229 / NCIMB 8711 / NCTC 7292 / S-41) protein is Probable inorganic carbon transporter subunit DabA.